The chain runs to 279 residues: Putative polysaccharide deacetylase YxkH (279 aa).

The N-terminal stretch at 1 to 19 (MKRLFLSIFLLGSCLALAA) is a signal peptide. C20 is lipidated: N-palmitoyl cysteine. C20 carries the S-diacylglycerol cysteine lipid modification. Residues 29 to 51 (QPMPKAEQKKPEKKAVQVQKKED) are disordered. The segment covering 34 to 51 (AEQKKPEKKAVQVQKKED) has biased composition (basic and acidic residues). Residues 119–279 (KCVLITFDDG…AFGAYIESMK (161 aa)) enclose the NodB homology domain.

The protein belongs to the polysaccharide deacetylase family.

It is found in the cell membrane. The sequence is that of Putative polysaccharide deacetylase YxkH (yxkH) from Bacillus subtilis (strain 168).